The sequence spans 217 residues: Probable transaldolase (217 aa).

Lysine 83 (schiff-base intermediate with substrate) is an active-site residue.

The protein belongs to the transaldolase family. Type 3B subfamily.

It localises to the cytoplasm. It catalyses the reaction D-sedoheptulose 7-phosphate + D-glyceraldehyde 3-phosphate = D-erythrose 4-phosphate + beta-D-fructose 6-phosphate. The protein operates within carbohydrate degradation; pentose phosphate pathway; D-glyceraldehyde 3-phosphate and beta-D-fructose 6-phosphate from D-ribose 5-phosphate and D-xylulose 5-phosphate (non-oxidative stage): step 2/3. Transaldolase is important for the balance of metabolites in the pentose-phosphate pathway. In Anaeromyxobacter sp. (strain K), this protein is Probable transaldolase.